Consider the following 531-residue polypeptide: Histone-arginine methyltransferase CARMER (531 aa).

Positions 141 to 450 constitute an SAM-dependent MTase PRMT-type domain; that stretch reads ASQYFQFYGY…QSYDVTIDLH (310 aa). Q154, R163, G187, E209, E238, and T266 together coordinate S-adenosyl-L-methionine. Asymmetric dimethylarginine; by autocatalysis is present on R501.

Belongs to the class I-like SAM-binding methyltransferase superfamily. Protein arginine N-methyltransferase family. As to quaternary structure, homodimer. Post-translationally, the dimethylated protein is the major form.

It localises to the cytoplasm. It is found in the nucleus. The catalysed reaction is L-arginyl-[protein] + 2 S-adenosyl-L-methionine = N(omega),N(omega)-dimethyl-L-arginyl-[protein] + 2 S-adenosyl-L-homocysteine + 2 H(+). Its function is as follows. Methylates (mono- and asymmetric dimethylation) the guanidino nitrogens of arginyl residues in proteins. May methylate histone H3 at 'Arg-17' and activate transcription via chromatin remodeling. This is Histone-arginine methyltransferase CARMER (Art4) from Drosophila ananassae (Fruit fly).